Reading from the N-terminus, the 501-residue chain is Ammonium transporter 2 member 2 (501 aa).

A run of 11 helical transmembrane segments spans residues 35-55, 64-84, 140-160, 174-194, 203-223, 238-258, 274-294, 298-318, 322-342, 356-376, and 412-432; these read VAAT…YGSI, SAFM…LVGF, LVLF…GSLL, LWLL…GFLY, GGYV…YWVG, ILLM…FNGG, TNVS…IFFG, VIGA…GAGL, WSAM…MMIL, LAVF…TGLL, and FVTV…GLFI.

The protein belongs to the ammonia transporter channel (TC 1.A.11.2) family.

Its subcellular location is the membrane. In terms of biological role, involved in ammonium transport. This Oryza sativa subsp. japonica (Rice) protein is Ammonium transporter 2 member 2 (AMT2-2).